A 165-amino-acid chain; its full sequence is Lipoprotein signal peptidase (165 aa).

Transmembrane regions (helical) follow at residues 9–29, 69–89, and 100–120; these read LLTISFFVLIDWVTKLAVLLY, KYFLLLIRIVIILGILAFLFL, and FSLILLCSGAIGNVGDIFFYN. Active-site residues include Asp-124 and Asp-142. A helical membrane pass occupies residues 133-153; sequence WSFPTFNFADIFISLGTLIFV.

This sequence belongs to the peptidase A8 family.

It is found in the cell inner membrane. It carries out the reaction Release of signal peptides from bacterial membrane prolipoproteins. Hydrolyzes -Xaa-Yaa-Zaa-|-(S,diacylglyceryl)Cys-, in which Xaa is hydrophobic (preferably Leu), and Yaa (Ala or Ser) and Zaa (Gly or Ala) have small, neutral side chains.. It participates in protein modification; lipoprotein biosynthesis (signal peptide cleavage). Its function is as follows. This protein specifically catalyzes the removal of signal peptides from prolipoproteins. This chain is Lipoprotein signal peptidase, found in Chlamydia felis (strain Fe/C-56) (Chlamydophila felis).